The primary structure comprises 585 residues: Conglutin alpha 3 (585 aa).

An N-terminal signal peptide occupies residues 1 to 23 (MANPFLLSLSLCLVLLYTSACLG). 2 disulfide bridges follow: Cys32–Cys65 and Cys108–Cys406. One can recognise a Cupin type-1 1 domain in the interval 37-258 (LNALEPDNRI…ALNIDEDTVH (222 aa)). Disordered regions lie at residues 113–147 (EEAQ…HFRE), 199–240 (EEYP…ILSG), and 283–402 (KWQE…NGLE). Residues 136-147 (EDSHQKIRHFRE) show a composition bias toward basic and acidic residues. Residues 211-224 (RQQHQRPSGRRHGQ) show a composition bias toward basic residues. Positions 309-320 (REEEEKEEEDEP) are enriched in acidic residues. The span at 338–350 (ERGRGRGGSEWKR) shows a compositional bias: basic and acidic residues. A Cupin type-1 2 domain is found at 412–558 (ENIADPTRAD…AFRLSLNQVS (147 aa)). Positions 565–579 (NHNPLVTPQSQSQDH) are enriched in polar residues. A disordered region spans residues 565-585 (NHNPLVTPQSQSQDHNLVKVA).

This sequence belongs to the 11S seed storage protein (globulins) family. As to quaternary structure, hexamer; each subunit is composed of an acidic and a basic chain derived from a single precursor and linked by a disulfide bond. Component of globulins complexes which accumulate in seeds.

Sulfur-rich seed storage protein. This protein found in the seeds of many leguminous and non-leguminous plants is the source of sulfur-containing amino acids in seed meals. The protein is Conglutin alpha 3 of Lupinus angustifolius (Narrow-leaved blue lupine).